The primary structure comprises 228 residues: Immunogenic protein MPB64 (228 aa).

Positions 1–23 are cleaved as a signal peptide; that stretch reads MRIKIFMLVTAVVLLCCSGVATA.

The protein belongs to the RsiV family.

It localises to the secreted. The chain is Immunogenic protein MPB64 (mpb64) from Mycobacterium bovis (strain ATCC BAA-935 / AF2122/97).